The chain runs to 229 residues: Complex I assembly factor TMEM126B, mitochondrial (229 aa).

The next 4 membrane-spanning stretches (helical) occupy residues 71-91 (IRGT…ANLV), 109-129 (LTTL…TDAL), 140-160 (VLRS…ALAF), and 198-218 (VPLL…YAVC).

As to quaternary structure, part of the mitochondrial complex I assembly/MCIA complex that comprises at least the core subunits TMEM126B, NDUFAF1, ECSIT and ACAD9 and complement subunits such as COA1 and TMEM186. Associates with the intermediate 370 kDa subcomplex of incompletely assembled complex I. Interacts with TMEM70.

Its subcellular location is the mitochondrion membrane. Functionally, as part of the MCIA complex, involved in the assembly of the mitochondrial complex I. Participates in constructing the membrane arm of complex I. This is Complex I assembly factor TMEM126B, mitochondrial from Rattus norvegicus (Rat).